Consider the following 347-residue polypeptide: Large ribosomal subunit protein uL10 (347 aa).

Residues 312–347 (AAAPAEEEVKKEEEPEEEEEDHAEEDGMAGLGALFG) form a disordered region. Residues 325–338 (EPEEEEEDHAEEDG) show a composition bias toward acidic residues.

Belongs to the universal ribosomal protein uL10 family. As to quaternary structure, part of the 50S ribosomal subunit. Forms part of the ribosomal stalk which helps the ribosome interact with GTP-bound translation factors. Forms a heptameric L10(L12)2(L12)2(L12)2 complex, where L10 forms an elongated spine to which the L12 dimers bind in a sequential fashion.

Its function is as follows. Forms part of the ribosomal stalk, playing a central role in the interaction of the ribosome with GTP-bound translation factors. The polypeptide is Large ribosomal subunit protein uL10 (Methanosarcina acetivorans (strain ATCC 35395 / DSM 2834 / JCM 12185 / C2A)).